Reading from the N-terminus, the 862-residue chain is Valine--tRNA ligase (862 aa).

A 'HIGH' region motif is present at residues 43-53 (PTVSGALHVGH). A disordered region spans residues 459–494 (ERPILPDDAALPVDPSSDTPTGYHDSQRHQPGGFMA). Residues 574–578 (KMSKS) carry the 'KMSKS' region motif. Lys-577 contacts ATP.

The protein belongs to the class-I aminoacyl-tRNA synthetase family. ValS type 2 subfamily. Monomer.

The protein resides in the cytoplasm. It catalyses the reaction tRNA(Val) + L-valine + ATP = L-valyl-tRNA(Val) + AMP + diphosphate. Its function is as follows. Catalyzes the attachment of valine to tRNA(Val). As ValRS can inadvertently accommodate and process structurally similar amino acids such as threonine, to avoid such errors, it has a 'posttransfer' editing activity that hydrolyzes mischarged Thr-tRNA(Val) in a tRNA-dependent manner. The chain is Valine--tRNA ligase from Salinispora arenicola (strain CNS-205).